Reading from the N-terminus, the 345-residue chain is Dihydroorotase (345 aa).

Residues histidine 13 and histidine 15 each coordinate Zn(2+). Residues 15 to 17 (HLR) and asparagine 41 each bind substrate. Lysine 99, histidine 136, and histidine 174 together coordinate Zn(2+). Position 99 is an N6-carboxylysine (lysine 99). A substrate-binding site is contributed by histidine 136. Leucine 219 serves as a coordination point for substrate. Aspartate 247 is a Zn(2+) binding site. Aspartate 247 is a catalytic residue. Substrate contacts are provided by histidine 251 and alanine 263.

It belongs to the metallo-dependent hydrolases superfamily. DHOase family. Class II DHOase subfamily. In terms of assembly, homodimer. The cofactor is Zn(2+).

The enzyme catalyses (S)-dihydroorotate + H2O = N-carbamoyl-L-aspartate + H(+). It participates in pyrimidine metabolism; UMP biosynthesis via de novo pathway; (S)-dihydroorotate from bicarbonate: step 3/3. Catalyzes the reversible cyclization of carbamoyl aspartate to dihydroorotate. In Agrobacterium fabrum (strain C58 / ATCC 33970) (Agrobacterium tumefaciens (strain C58)), this protein is Dihydroorotase.